The primary structure comprises 968 residues: RNA polymerase-associated protein RapA (968 aa).

Residues 164 to 334 (EVGQRHAPRV…FARLRLLDPD (171 aa)) enclose the Helicase ATP-binding domain. 177-184 (DEVGLGKT) contributes to the ATP binding site. The DEAH box motif lies at 280–283 (DEAH). The region spanning 490 to 644 (RVEWLLNYLV…TCPTGRTIYD (155 aa)) is the Helicase C-terminal domain.

The protein belongs to the SNF2/RAD54 helicase family. RapA subfamily. As to quaternary structure, interacts with the RNAP. Has a higher affinity for the core RNAP than for the holoenzyme. Its ATPase activity is stimulated by binding to RNAP.

Its function is as follows. Transcription regulator that activates transcription by stimulating RNA polymerase (RNAP) recycling in case of stress conditions such as supercoiled DNA or high salt concentrations. Probably acts by releasing the RNAP, when it is trapped or immobilized on tightly supercoiled DNA. Does not activate transcription on linear DNA. Probably not involved in DNA repair. In Yersinia pseudotuberculosis serotype O:1b (strain IP 31758), this protein is RNA polymerase-associated protein RapA.